We begin with the raw amino-acid sequence, 249 residues long: BPI fold-containing family A member 2 (249 aa).

Residues 1 to 18 (MLQLWKLVLLCGVLTGTS) form the signal peptide. N-linked (GlcNAc...) asparagine glycans are attached at residues asparagine 124 and asparagine 132. A disulfide bridge links cysteine 174 with cysteine 217.

The protein belongs to the BPI/LBP/Plunc superfamily. Plunc family. Detected in submandibular gland. Secreted into saliva.

The protein resides in the secreted. Its function is as follows. Has strong antibacterial activity against P.aeruginosa. This is BPI fold-containing family A member 2 (BPIFA2) from Homo sapiens (Human).